We begin with the raw amino-acid sequence, 103 residues long: NADH-quinone oxidoreductase subunit K (103 aa).

The next 3 membrane-spanning stretches (helical) occupy residues 6 to 26 (LSHFLILGAILFAISVVGIFL), 32 to 52 (LVLLMAIELMLLAVNMNFVAF), and 63 to 83 (IFVFFILTVAAAESAIGLAIL).

It belongs to the complex I subunit 4L family. NDH-1 is composed of 14 different subunits. Subunits NuoA, H, J, K, L, M, N constitute the membrane sector of the complex.

Its subcellular location is the cell inner membrane. It catalyses the reaction a quinone + NADH + 5 H(+)(in) = a quinol + NAD(+) + 4 H(+)(out). Functionally, NDH-1 shuttles electrons from NADH, via FMN and iron-sulfur (Fe-S) centers, to quinones in the respiratory chain. The immediate electron acceptor for the enzyme in this species is believed to be ubiquinone. Couples the redox reaction to proton translocation (for every two electrons transferred, four hydrogen ions are translocated across the cytoplasmic membrane), and thus conserves the redox energy in a proton gradient. The protein is NADH-quinone oxidoreductase subunit K of Dechloromonas aromatica (strain RCB).